The following is a 193-amino-acid chain: MSALRLIVGLGNPGPEHAQTRHNAGFRFVDALAERTGARWGLDSKLFGETAKAEIAGHTVWLLKPATFMNLSGKSITAALRFWKIEPEQLLVAHDELDLAPGTARLKFDGGHGGQNGLRDTIRLLGHGKFHRLRVGIGHPGHKDRVVPWVLGRAGRDDDMAIGEAVDAAIDALPLALDGNFNEAMKRLHTPKK.

His17 lines the tRNA pocket. The Proton acceptor role is filled by His22. Residues Phe68, Asn70, and Asn116 each coordinate tRNA.

It belongs to the PTH family. As to quaternary structure, monomer.

It is found in the cytoplasm. The catalysed reaction is an N-acyl-L-alpha-aminoacyl-tRNA + H2O = an N-acyl-L-amino acid + a tRNA + H(+). In terms of biological role, hydrolyzes ribosome-free peptidyl-tRNAs (with 1 or more amino acids incorporated), which drop off the ribosome during protein synthesis, or as a result of ribosome stalling. Catalyzes the release of premature peptidyl moieties from peptidyl-tRNA molecules trapped in stalled 50S ribosomal subunits, and thus maintains levels of free tRNAs and 50S ribosomes. This chain is Peptidyl-tRNA hydrolase, found in Xanthomonas campestris pv. campestris (strain ATCC 33913 / DSM 3586 / NCPPB 528 / LMG 568 / P 25).